The chain runs to 149 residues: 3-hydroxyacyl-[acyl-carrier-protein] dehydratase FabZ (149 aa).

H49 is a catalytic residue.

Belongs to the thioester dehydratase family. FabZ subfamily.

The protein resides in the cytoplasm. The catalysed reaction is a (3R)-hydroxyacyl-[ACP] = a (2E)-enoyl-[ACP] + H2O. In terms of biological role, involved in unsaturated fatty acids biosynthesis. Catalyzes the dehydration of short chain beta-hydroxyacyl-ACPs and long chain saturated and unsaturated beta-hydroxyacyl-ACPs. The sequence is that of 3-hydroxyacyl-[acyl-carrier-protein] dehydratase FabZ from Sulfurimonas denitrificans (strain ATCC 33889 / DSM 1251) (Thiomicrospira denitrificans (strain ATCC 33889 / DSM 1251)).